The following is a 157-amino-acid chain: 6,7-dimethyl-8-ribityllumazine synthase (157 aa).

5-amino-6-(D-ribitylamino)uracil contacts are provided by residues W27, 59–61, and 81–83; these read AIE and VVI. 86-87 contacts (2S)-2-hydroxy-3-oxobutyl phosphate; it reads ET. The active-site Proton donor is H89. N114 provides a ligand contact to 5-amino-6-(D-ribitylamino)uracil. R128 provides a ligand contact to (2S)-2-hydroxy-3-oxobutyl phosphate.

This sequence belongs to the DMRL synthase family. In terms of assembly, homopentamer.

The enzyme catalyses (2S)-2-hydroxy-3-oxobutyl phosphate + 5-amino-6-(D-ribitylamino)uracil = 6,7-dimethyl-8-(1-D-ribityl)lumazine + phosphate + 2 H2O + H(+). It participates in cofactor biosynthesis; riboflavin biosynthesis; riboflavin from 2-hydroxy-3-oxobutyl phosphate and 5-amino-6-(D-ribitylamino)uracil: step 1/2. Catalyzes the formation of 6,7-dimethyl-8-ribityllumazine by condensation of 5-amino-6-(D-ribitylamino)uracil with 3,4-dihydroxy-2-butanone 4-phosphate. This is the penultimate step in the biosynthesis of riboflavin. This Mycolicibacterium vanbaalenii (strain DSM 7251 / JCM 13017 / BCRC 16820 / KCTC 9966 / NRRL B-24157 / PYR-1) (Mycobacterium vanbaalenii) protein is 6,7-dimethyl-8-ribityllumazine synthase.